Here is a 222-residue protein sequence, read N- to C-terminus: Superoxide dismutase [Mn], mitochondrial (222 aa).

A mitochondrion-targeting transit peptide spans 1–24 (MLSRAVCGTGRQLAPALGYLGSRQ). Residue His50 participates in Mn(2+) binding. A 3'-nitrotyrosine modification is found at Tyr58. An N6-acetyllysine; alternate mark is found at Lys68 and Lys75. Lys68 and Lys75 each carry N6-succinyllysine; alternate. His98 is a Mn(2+) binding site. Lys114 is subject to N6-acetyllysine. 2 positions are modified to N6-acetyllysine; alternate: Lys122 and Lys130. N6-succinyllysine; alternate is present on residues Lys122 and Lys130. Residues Asp183 and His187 each contribute to the Mn(2+) site. An N6-acetyllysine modification is found at Lys202.

Belongs to the iron/manganese superoxide dismutase family. In terms of assembly, homotetramer. The cofactor is Mn(2+). Post-translationally, nitrated under oxidative stress. Nitration coupled with oxidation inhibits the catalytic activity. In terms of processing, acetylation at Lys-122 decreases enzymatic activity. Deacetylated by SIRT3 upon exposure to ionizing radiations or after long fasting. Polyubiquitinated; leading to proteasomal degradation. Deubiquitinated by USP36 which increases protein stability.

It localises to the mitochondrion matrix. The catalysed reaction is 2 superoxide + 2 H(+) = H2O2 + O2. In terms of biological role, destroys superoxide anion radicals which are normally produced within the cells and which are toxic to biological systems. This Macaca fascicularis (Crab-eating macaque) protein is Superoxide dismutase [Mn], mitochondrial (SOD2).